A 776-amino-acid chain; its full sequence is Disintegrin and metalloproteinase domain-containing protein 7 (776 aa).

A signal peptide spans 1–23 (MLPGCIFLMILLILQVKEKVILG). Residues 24-176 (VEGQQLVYPK…NYSCTELNFT (153 aa)) constitute a propeptide that is removed on maturation. The Extracellular portion of the chain corresponds to 26-669 (GQQLVYPKKL…WEETLNVTNV (644 aa)). 3 N-linked (GlcNAc...) asparagine glycosylation sites follow: asparagine 84, asparagine 167, and asparagine 174. Residues 199-394 (KYIELFIVAD…YKPTCMLNIP (196 aa)) enclose the Peptidase M12B domain. 4 disulfide bridges follow: cysteine 310–cysteine 389, cysteine 350–cysteine 373, cysteine 352–cysteine 357, and cysteine 460–cysteine 480. A Disintegrin domain is found at 402–488 (FQFCGNKKLD…ACPKDQFRVN (87 aa)). N-linked (GlcNAc...) asparagine glycosylation is found at asparagine 584, asparagine 629, and asparagine 665. A helical membrane pass occupies residues 670 to 690 (AILIVVLVLVIVGIGVLILLI). The Cytoplasmic portion of the chain corresponds to 691–776 (RYQKCIKLKQ…GIADPNQSAK (86 aa)). The tract at residues 757 to 776 (TLKPASKDSRGIADPNQSAK) is disordered.

In terms of assembly, interacts with ITM2B in sperm; the interaction increases following capacitation. Interacts with HSPA5 and CANX.

Its subcellular location is the membrane. Its function is as follows. Required for normal male fertility via maintenance of epithelial cell morphology in the caput epididymis and subsequently correct epididymis lumen structure required for sperm development. Plays a role in sperm motility, flagella morphology and tyrosine phosphorylation during sperm capacitance. Plays a role in normal expression levels of HSPA5, ITM2B and ADAM2 in sperm both prior to and post-capacitation. This is a non catalytic metalloprotease-like protein. This Macaca fascicularis (Crab-eating macaque) protein is Disintegrin and metalloproteinase domain-containing protein 7 (ADAM7).